We begin with the raw amino-acid sequence, 358 residues long: Peptide chain release factor 1 (358 aa).

Gln-235 is modified (N5-methylglutamine). A disordered region spans residues 284 to 309; sequence KVESERSASRKSQVGSGDRSERIRTY.

It belongs to the prokaryotic/mitochondrial release factor family. Methylated by PrmC. Methylation increases the termination efficiency of RF1.

The protein localises to the cytoplasm. Functionally, peptide chain release factor 1 directs the termination of translation in response to the peptide chain termination codons UAG and UAA. This chain is Peptide chain release factor 1, found in Bartonella tribocorum (strain CIP 105476 / IBS 506).